We begin with the raw amino-acid sequence, 85 residues long: MGEDMEKTMRFGFDKEKNTKHKALLLTIYEALQEKGYNPINQLVGYLLSGDPAYITSHKNARNLIRKIERDELLEELLKVYLERE.

The protein belongs to the UPF0297 family.

This is UPF0297 protein CHY_0540 from Carboxydothermus hydrogenoformans (strain ATCC BAA-161 / DSM 6008 / Z-2901).